The chain runs to 462 residues: Transcription factor-like protein EUC1 (462 aa).

Disordered stretches follow at residues 11 to 43 (GFGG…TTSP) and 66 to 97 (RPTD…GRIK). A phosphoserine mark is found at Ser-17 and Ser-23. Residues 26–35 (DSERRNHDLG) are compositionally biased toward basic and acidic residues. The homodimerization region stretch occupies residues 81-140 (SASATEPTNRIGPGRIKETPETNFNAFLIAQLTRMEEQNANLKEEISLMKKEQELFFLEN). Positions 105-135 (NAFLIAQLTRMEEQNANLKEEISLMKKEQEL) form a coiled coil. Disordered regions lie at residues 190 to 214 (QEAA…STNW) and 226 to 289 (GDPR…RNRR). The span at 197–214 (NPSTSTQAHQSQSRSTNW) shows a compositional bias: polar residues. Lys-231 is covalently cross-linked (Glycyl lysine isopeptide (Lys-Gly) (interchain with G-Cter in SUMO)). Phosphoserine occurs at positions 237 and 249. The span at 240-251 (ENGEYDGNESDE) shows a compositional bias: acidic residues. The segment covering 252–282 (NATTRNLPLNNPDSVSNADDSNNQLDGTGNE) has biased composition (polar residues). Thr-254 is subject to Phosphothreonine. The GCR1 DNA-binding region stretch occupies residues 296-385 (YKLNRAIQNV…QAIKVVENIR (90 aa)). Residues 441–455 (SLQQPHSIPNSSTGT) are compositionally biased toward polar residues. The tract at residues 441–462 (SLQQPHSIPNSSTGTPEHDQDT) is disordered.

Homodimer. Interacts with SLX5. Sumoylated at Lys-231 and subsequently ubiquitinated by the SUMO-targeted ubiquitin ligase (STUbL) complex SLX5/SLX8.

The protein localises to the chromosome. Functionally, transcription factor-like protein that binds to specific DNA motifs called ub-HS-motif associated with several locations where proteins other than histone H2B are ubiquitinated (ub-hotspots). Ubiquitination at these sites depends on the SUMO-targeted ubiquitin ligase (STUbL) complex SLX5/SLX8 and protein turnover on the CDC48 segregase. UBC9, SIZ1, or SIZ2 sumoylate DNA-bound EUC1 to stabilize its DNA-binding. Sumoylated EUC1 acts a cofactor required for the recruitment of the SLX5/SLX8 STUbL complex via specific contacts between EUC1 and SLX5, as well as an additional SUMO-mediated interaction. SLX5/SLX8 then ubiquitinates EUC1 and presumably other targets at ub-hotspots, and the CDC48/UFD1/NPL4 complex, together with UBX4 and UBX5, removes Lys-48-linked ubiquitinated proteins from chromatin. Ubiquitinated proteins could be either degraded by the proteasome or recycled by deubiquitination. EUC1 itself does not seem to underlie extensive turnover, as it is a very stable protein. EUC1 is able to act as a transcription factor, but its function at ub-hotspots does not seem to depend on this ability. EUC1-mediated ub-hotspots are crucial during stress responses when gene expression control is impaired. The chain is Transcription factor-like protein EUC1 from Saccharomyces cerevisiae (strain ATCC 204508 / S288c) (Baker's yeast).